Consider the following 164-residue polypeptide: UPF0114 protein YqhA (164 aa).

Helical transmembrane passes span Leu-15–Phe-35, Leu-53–Val-73, and Leu-136–Leu-156.

The protein belongs to the UPF0114 family.

The protein resides in the cell membrane. In Escherichia coli O6:H1 (strain CFT073 / ATCC 700928 / UPEC), this protein is UPF0114 protein YqhA.